We begin with the raw amino-acid sequence, 264 residues long: MARDITFLTVFLESCGAVNNDEAGKLLSAWTSTVRIEGPEPTDSNSLYIPLLPPGMLKIKLNFKMNDRLVTEEQELFTKLREIVGSSIRFWEEQLFYQVQDVSTIENHVILSLKCTILTDAQISTFISKPRELHTHAKGYPEIYYLSELSTTVNFFSKEGNYVEISHVIPHFNEYFSSLIVSQLEFEYPMVFSMISRLRLKWQQSSLAPISYALTSNSVLLPIMLNMIAQDKSSTTAYQILCRRRGPPIQNFQIFSIPAVTYNK.

The leucine-zipper stretch occupies residues leucine 200–leucine 221.

Belongs to the TOP6B-like family. In terms of assembly, interacts with REC104; seems to form a functional unit with REC104. REC102-REC104 interacts with SKI8-SPO11 and this interaction is required for proper subcellular location of the proteins during the initiation of recombination. Interacts with MEI4, REC114 and SPO11.

The protein resides in the nucleus. Functionally, required for formation of the SPO11-mediated double-strand breaks (DSBs) that initiate meiotic recombination. May mediate the interaction between SPO11 subunits during meiosis. Also needed for homolog chromosome pairing, synaptonemal complex formation, and for the proper timing of the first meiotic division. Not required for mitosis and mitotic DNA repair mechanisms. This chain is Meiotic recombination protein REC102 (REC102), found in Saccharomyces cerevisiae (strain RM11-1a) (Baker's yeast).